The following is a 303-amino-acid chain: Recombination-associated protein RdgC (303 aa).

Belongs to the RdgC family.

The protein localises to the cytoplasm. Its subcellular location is the nucleoid. May be involved in recombination. This is Recombination-associated protein RdgC from Yersinia enterocolitica serotype O:8 / biotype 1B (strain NCTC 13174 / 8081).